A 245-amino-acid polypeptide reads, in one-letter code: PF03932 family protein CutC (245 aa).

Belongs to the CutC family.

The protein resides in the cytoplasm. The protein is PF03932 family protein CutC of Caulobacter vibrioides (strain ATCC 19089 / CIP 103742 / CB 15) (Caulobacter crescentus).